A 297-amino-acid polypeptide reads, in one-letter code: Probable porphobilinogen deaminase (297 aa).

S-(dipyrrolylmethanemethyl)cysteine is present on Cys-241.

It belongs to the HMBS family. It depends on dipyrromethane as a cofactor.

It catalyses the reaction 4 porphobilinogen + H2O = hydroxymethylbilane + 4 NH4(+). The protein operates within porphyrin-containing compound metabolism; protoporphyrin-IX biosynthesis; coproporphyrinogen-III from 5-aminolevulinate: step 2/4. Functionally, tetrapolymerization of the monopyrrole PBG into the hydroxymethylbilane pre-uroporphyrinogen in several discrete steps. This is Probable porphobilinogen deaminase from Pyrobaculum arsenaticum (strain DSM 13514 / JCM 11321 / PZ6).